The chain runs to 99 residues: Nucleoid-associated protein SPN23F10240 (99 aa).

It belongs to the YbaB/EbfC family. In terms of assembly, homodimer.

Its subcellular location is the cytoplasm. The protein resides in the nucleoid. Binds to DNA and alters its conformation. May be involved in regulation of gene expression, nucleoid organization and DNA protection. The chain is Nucleoid-associated protein SPN23F10240 from Streptococcus pneumoniae (strain ATCC 700669 / Spain 23F-1).